A 302-amino-acid polypeptide reads, in one-letter code: Sulfate adenylyltransferase subunit 2 (302 aa).

The tract at residues 280–302 (RQGRAIDHDQSGSMELKKRQGYF) is disordered.

The protein belongs to the PAPS reductase family. CysD subfamily. Heterodimer composed of CysD, the smaller subunit, and CysN.

The catalysed reaction is sulfate + ATP + H(+) = adenosine 5'-phosphosulfate + diphosphate. Its pathway is sulfur metabolism; hydrogen sulfide biosynthesis; sulfite from sulfate: step 1/3. Its function is as follows. With CysN forms the ATP sulfurylase (ATPS) that catalyzes the adenylation of sulfate producing adenosine 5'-phosphosulfate (APS) and diphosphate, the first enzymatic step in sulfur assimilation pathway. APS synthesis involves the formation of a high-energy phosphoric-sulfuric acid anhydride bond driven by GTP hydrolysis by CysN coupled to ATP hydrolysis by CysD. The sequence is that of Sulfate adenylyltransferase subunit 2 from Vibrio parahaemolyticus serotype O3:K6 (strain RIMD 2210633).